The sequence spans 522 residues: Peptide chain release factor 3 (522 aa).

A tr-type G domain is found at 10–277 (ASRKTFAIIS…TFVDFAPAPS (268 aa)). GTP is bound by residues 19 to 26 (SHPDAGKT), 87 to 91 (DTPGH), and 141 to 144 (NKMD).

This sequence belongs to the TRAFAC class translation factor GTPase superfamily. Classic translation factor GTPase family. PrfC subfamily.

It is found in the cytoplasm. Increases the formation of ribosomal termination complexes and stimulates activities of RF-1 and RF-2. It binds guanine nucleotides and has strong preference for UGA stop codons. It may interact directly with the ribosome. The stimulation of RF-1 and RF-2 is significantly reduced by GTP and GDP, but not by GMP. The chain is Peptide chain release factor 3 from Listeria welshimeri serovar 6b (strain ATCC 35897 / DSM 20650 / CCUG 15529 / CIP 8149 / NCTC 11857 / SLCC 5334 / V8).